The following is a 121-amino-acid chain: Mediator of RNA polymerase II transcription subunit 22 (121 aa).

Belongs to the Mediator complex subunit 22 family. As to quaternary structure, component of the Mediator complex.

The protein localises to the nucleus. Component of the Mediator complex, a coactivator involved in the regulated transcription of nearly all RNA polymerase II-dependent genes. Mediator functions as a bridge to convey information from gene-specific regulatory proteins to the basal RNA polymerase II transcription machinery. Mediator is recruited to promoters by direct interactions with regulatory proteins and serves as a scaffold for the assembly of a functional preinitiation complex with RNA polymerase II and the general transcription factors. The sequence is that of Mediator of RNA polymerase II transcription subunit 22 (SRB6) from Eremothecium gossypii (strain ATCC 10895 / CBS 109.51 / FGSC 9923 / NRRL Y-1056) (Yeast).